We begin with the raw amino-acid sequence, 628 residues long: EIN3-binding F-box protein 1 (628 aa).

Positions 61-109 (PVSIDVLPDECLFEIFRRLSGPQERSACAFVSKQWLTLVSSIRQKEIDV) constitute an F-box domain.

In terms of assembly, part of a SCF (SKP1-cullin-F-box) protein ligase complex. Interacts with CUL1, SKP1A/ASK1, SKP1B/ASK2, ASK11, ASK12, ASK13, ASK18, EIN3, and EIL1. In terms of tissue distribution, ubiquitous.

Its subcellular location is the nucleus. The protein operates within protein modification; protein ubiquitination. In terms of biological role, component of SCF(EBF1) E3 ubiquitin ligase complexes, which may mediate the ubiquitination and subsequent proteasomal degradation of target proteins (probably including EIN3 and EIL1). Regulator of the ethylene signaling cascade by modulating the stability of EIN3 and EIL1 proteins. Confers insensitivity to ethylene. In Arabidopsis thaliana (Mouse-ear cress), this protein is EIN3-binding F-box protein 1 (EBF1).